We begin with the raw amino-acid sequence, 207 residues long: Small ribosomal subunit protein uS4c (207 aa).

The region spanning 92 to 156 is the S4 RNA-binding domain; it reads MRLDNILFRL…YQSIITKRIE (65 aa).

The protein belongs to the universal ribosomal protein uS4 family. Part of the 30S ribosomal subunit. Contacts protein S5. The interaction surface between S4 and S5 is involved in control of translational fidelity.

The protein resides in the plastid. The protein localises to the chloroplast. In terms of biological role, one of the primary rRNA binding proteins, it binds directly to 16S rRNA where it nucleates assembly of the body of the 30S subunit. Its function is as follows. With S5 and S12 plays an important role in translational accuracy. The chain is Small ribosomal subunit protein uS4c (rps4) from Equisetum pratense (Meadow horsetail).